Reading from the N-terminus, the 233-residue chain is Pilin-like protein PilA3 (233 aa).

The propeptide at 1–4 is leader sequence; it reads MKRG. F5 is subject to N-methylphenylalanine. Residues 5–25 form a helical membrane-spanning segment; sequence FTLVEVLVAMAILVVVLAVGV. The segment at 121 to 143 is disordered; it reads LRRSDVNATPSSGSDCTTPPPNS. Positions 126 to 137 are enriched in polar residues; the sequence is VNATPSSGSDCT.

The protein localises to the cell inner membrane. Its subcellular location is the cell outer membrane. It is found in the periplasm. Functionally, plays an essential role in natural DNA transformation but is not required for pilus biogenesis. This is Pilin-like protein PilA3 (pilA3) from Thermus thermophilus (strain ATCC BAA-163 / DSM 7039 / HB27).